A 487-amino-acid polypeptide reads, in one-letter code: MILKILNEIASIGSTKQKQAILEKNKDNELLKRVYRLTYSRGLQYYIKKWPKPGIATQSFGMLTLTDMLDFIEFTLATRKLTGNAAIEELTGYITDGKKDDVEVLRRVMMRDLECGASVSIANKVWPGLIPEQPQMLASSYDEKGINKNIKFPAFAQLKADGARCFAEVRGDELDDVRLLSRAGNEYLGLDLLKEELIKMTAEARQIHPEGVLIDGELVYHEQVKKEPEGLDFLFDAHPENSKVKDFTEVAESRTASNGIANKSLKGTISEKEAQCMKFQVWDYVPLVEVYGLPAFRLKYDVRFSKLEQMTSGYDKVILIENQVVNNLDEAKVIYKKYIDQGLEGIILKNIDGLWENARSKNLYKFKEVIDVDLKIVGIYPHRKDPTKAGGFILESECGKIKVNAGSGLKDKAGVKSHELDRTRIMENQNYYIGKILECECNGWLKSDGRTDYVKLFLPIAIRLREDKTKANTFEDVFGDFHEVTGL.

The N6-AMP-lysine intermediate role is filled by Lys159. The ATP site is built by Arg164, Arg182, and Glu217. Residue Glu217 coordinates a divalent metal cation. The tract at residues 229-237 (EGLDFLFDA) is interaction with the sliding clamp. Glu344 is an a divalent metal cation binding site. ATP-binding residues include Arg359 and Lys365.

Belongs to the ATP-dependent DNA ligase family. As to quaternary structure, interacts with the sliding clamp. Requires a divalent metal cation as cofactor.

It catalyses the reaction ATP + (deoxyribonucleotide)n-3'-hydroxyl + 5'-phospho-(deoxyribonucleotide)m = (deoxyribonucleotide)n+m + AMP + diphosphate.. DNA ligase, which is expressed in the early stage of lytic development, has been implicated in T4 DNA synthesis and genetic recombination. It may also play a role in T4 DNA repair. In Escherichia coli (Bacteriophage T6), this protein is DNA ligase (30).